A 244-amino-acid chain; its full sequence is MRAEDVVRAPSTPLDAPAFPAGPYRFTDREYLNITYRTDPEALRRVVPEPLRVAEPLVRFEVMRMPDVTGLGDYTEAGQLAVVEYEGEPGEYGISIHVDNFPAIASGREIGAFPKKAGRPRLYVDQDTLVGTLDHGTLPVARATMGYKHRPLNTEQAREELTRPTFMLKKLPHYDGSPRICELVRTQIADIVVKGAWSGPARLQLFAHALAPLADLPVLEVVSAAHVLTDLTLGRARVVHDYLA.

Residue K115 is the Schiff-base intermediate with acetoacetate of the active site.

Belongs to the ADC family.

The catalysed reaction is acetoacetate + H(+) = acetone + CO2. Its function is as follows. Catalyzes the conversion of acetoacetate to acetone and carbon dioxide. The sequence is that of Acetoacetate decarboxylase from Streptomyces nogalater.